Reading from the N-terminus, the 1695-residue chain is Sialoadhesin (1695 aa).

The N-terminal stretch at 1–19 (MCVLFSLLLLASVFSLGQT) is a signal peptide. The 117-residue stretch at 20–136 (TWGVSSPKNV…DVKGTTVTVT (117 aa)) folds into the Ig-like V-type domain. The Extracellular portion of the chain corresponds to 20 to 1639 (TWGVSSPKNV…ALHQLQLFQR (1620 aa)). Disulfide bonds link Cys36–Cys166, Cys41–Cys98, Cys160–Cys218, and Cys263–Cys306. N-acetylneuraminate is bound by residues Tyr63, Arg116, and 122-126 (SNRWL). Ig-like C2-type domains are found at residues 153–235 (GMER…YLQV), 239–321 (PKGV…SPLS), 326–406 (MAEV…SPLS), 416–508 (PDLT…LDFY), 509–594 (ANVA…TVLT), 602–701 (PTFT…ASFN), 704–781 (ATVL…AQLS), 795–890 (PKLS…FQVR), 894–973 (VQVS…APVS), 980–1079 (PRHV…ADFD), 1081–1161 (QAVR…RPVT), 1172–1264 (RLTY…MNPS), 1245–1337 (KANT…ASLQ), 1342–1439 (PRDA…RLLT), 1442–1520 (DIRV…ATTS), and 1534–1627 (PTLI…AYFG). Asn159 is a glycosylation site (N-linked (GlcNAc...) asparagine). N-linked (GlcNAc...) asparagine glycosylation is found at Asn266, Asn299, and Asn340. 2 disulfides stabilise this stretch: Cys347–Cys391 and Cys434–Cys492. An N-linked (GlcNAc...) asparagine glycan is attached at Asn500. Cysteines 532 and 576 form a disulfide. Asn583 carries an N-linked (GlcNAc...) asparagine glycan. Cys625 and Cys685 form a disulfide bridge. Residues Asn693, Asn722, and Asn737 are each glycosylated (N-linked (GlcNAc...) asparagine). 2 disulfides stabilise this stretch: Cys725/Cys770 and Cys813/Cys872. Positions 827-829 (RGD) match the Cell attachment site motif. Residue Asn882 is glycosylated (N-linked (GlcNAc...) asparagine). Intrachain disulfides connect Cys912–Cys956 and Cys1001–Cys1063. Asn1090 and Asn1100 each carry an N-linked (GlcNAc...) asparagine glycan. 2 disulfide bridges follow: Cys1103–Cys1145 and Cys1189–Cys1237. Asn1247 is a glycosylation site (N-linked (GlcNAc...) asparagine). 2 disulfide bridges follow: Cys1277/Cys1320 and Cys1363/Cys1422. N-linked (GlcNAc...) asparagine glycosylation is found at Asn1460 and Asn1474. 2 cysteine pairs are disulfide-bonded: Cys1463-Cys1509 and Cys1552-Cys1611. Residues 1640-1660 (LLWVLGFLAGFLCLLLGLVAY) traverse the membrane as a helical segment. Over 1661–1695 (HTWRKKSSTKLNEDENSAEMATKKNTIQEEVVAAL) the chain is Cytoplasmic.

It belongs to the immunoglobulin superfamily. SIGLEC (sialic acid binding Ig-like lectin) family. In terms of assembly, interacts with CLEC10A. Detected in lymph node in the subcapsular sinus, interfollicular regions, and T and B-cell boundary (at protein level). Expressed by macrophages in various tissues. Highest expression in spleen and lymph node with lower amounts in lung, liver, bone marrow, heart and skin. No expression in thymus, kidney, brain or small intestine.

Its subcellular location is the cell membrane. The protein resides in the secreted. In terms of biological role, macrophage-restricted adhesion molecule that mediates sialic-acid dependent binding to lymphocytes, including granulocytes, monocytes, natural killer cells, B-cells and CD8 T-cells. Plays a crucial role in limiting bacterial dissemination by engaging sialylated bacteria to promote effective phagocytosis and antigen presentation for the adaptive immune response. Mediates the uptake of various enveloped viruses via sialic acid recognition and subsequently induces the formation of intracellular compartments filled with virions (VCCs). In turn, enhances macrophage-to-T-cell transmission of several viruses including murine leukemia virus. Acts as an endocytic receptor mediating clathrin dependent endocytosis. Preferentially binds to alpha-2,3-linked sialic acid. Binds to SPN/CD43 on T-cells. May play a role in hemopoiesis. Plays a role in the inhibition of antiviral innate immune by promoting TBK1 degradation via TYROBP and TRIM27-mediated ubiquitination. This is Sialoadhesin (Siglec1) from Mus musculus (Mouse).